We begin with the raw amino-acid sequence, 187 residues long: UPF0301 protein CT0663 (187 aa).

This sequence belongs to the UPF0301 (AlgH) family.

This chain is UPF0301 protein CT0663, found in Chlorobaculum tepidum (strain ATCC 49652 / DSM 12025 / NBRC 103806 / TLS) (Chlorobium tepidum).